The primary structure comprises 372 residues: Chaperone protein DnaJ (372 aa).

In terms of domain architecture, J spans 3 to 68 (NLYEILEVNE…EKRKKYDMYG (66 aa)). Residues 130 to 212 (GTKKEISYKK…CKGKGYEIER (83 aa)) form a CR-type zinc finger. Cys-143, Cys-146, Cys-160, Cys-163, Cys-186, Cys-189, Cys-200, and Cys-203 together coordinate Zn(2+). CXXCXGXG motif repeat units follow at residues 143-150 (CHVCNGDG), 160-167 (CEKCHGTG), 186-193 (CDKCHGEG), and 200-207 (CENCKGKG).

Belongs to the DnaJ family. In terms of assembly, homodimer. It depends on Zn(2+) as a cofactor.

It is found in the cytoplasm. Its function is as follows. Participates actively in the response to hyperosmotic and heat shock by preventing the aggregation of stress-denatured proteins and by disaggregating proteins, also in an autonomous, DnaK-independent fashion. Unfolded proteins bind initially to DnaJ; upon interaction with the DnaJ-bound protein, DnaK hydrolyzes its bound ATP, resulting in the formation of a stable complex. GrpE releases ADP from DnaK; ATP binding to DnaK triggers the release of the substrate protein, thus completing the reaction cycle. Several rounds of ATP-dependent interactions between DnaJ, DnaK and GrpE are required for fully efficient folding. Also involved, together with DnaK and GrpE, in the DNA replication of plasmids through activation of initiation proteins. This is Chaperone protein DnaJ from Finegoldia magna (strain ATCC 29328 / DSM 20472 / WAL 2508) (Peptostreptococcus magnus).